Reading from the N-terminus, the 574-residue chain is MYND-type zinc finger protein C31F10.10c (574 aa).

Disordered stretches follow at residues 207 to 253 and 283 to 307; these read DSGD…QDPR and MTTPSSPSYSRQTGPASETINDEID. 2 stretches are compositionally biased toward polar residues: residues 243–253 and 283–301; these read IYSNDSFQDPR and MTTPSSPSYSRQTGPASET. The MYND-type; degenerate zinc-finger motif lies at 482 to 523; that stretch reads NLLCNKWEEHSRQFAKCRRCRRTKYCSKECQHQAWPGHSRWC. Cysteine 498, cysteine 501, histidine 519, and cysteine 523 together coordinate Zn(2+). The disordered stretch occupies residues 534–574; that stretch reads KRESSKINSVTESESTASPAASVIPVGTESVTSSTQSDSRL. Residues 542 to 556 show a composition bias toward low complexity; it reads SVTESESTASPAASV. Over residues 562-574 the composition is skewed to polar residues; sequence ESVTSSTQSDSRL.

The protein belongs to the MUB1/samB family.

It is found in the nucleus. The protein resides in the cytoplasm. It localises to the cytoskeleton. The protein localises to the microtubule organizing center. Its subcellular location is the spindle pole body. The chain is MYND-type zinc finger protein C31F10.10c from Schizosaccharomyces pombe (strain 972 / ATCC 24843) (Fission yeast).